The following is a 142-amino-acid chain: Large ribosomal subunit protein uL16 (142 aa).

Belongs to the universal ribosomal protein uL16 family. In terms of assembly, part of the 50S ribosomal subunit.

Binds 23S rRNA and is also seen to make contacts with the A and possibly P site tRNAs. The protein is Large ribosomal subunit protein uL16 of Pseudothermotoga lettingae (strain ATCC BAA-301 / DSM 14385 / NBRC 107922 / TMO) (Thermotoga lettingae).